Here is a 499-residue protein sequence, read N- to C-terminus: Cytochrome P450 705A12 (499 aa).

Residues 4–24 (LIIVDFQNISIFILLCLFSFL) form a helical membrane-spanning segment. Cys-439 is a heme binding site.

Belongs to the cytochrome P450 family. Heme is required as a cofactor.

It is found in the membrane. Functionally, may be involved in hydroxylation of the triterpene marneral. The polypeptide is Cytochrome P450 705A12 (Arabidopsis thaliana (Mouse-ear cress)).